The following is a 199-amino-acid chain: Imidazole glycerol phosphate synthase subunit HisH 2 (199 aa).

Residues 1–199 enclose the Glutamine amidotransferase type-1 domain; that stretch reads MIAVIDVSGN…NNFLSLESTC (199 aa). The Nucleophile role is filled by Cys-76. Residues His-177 and Glu-179 contribute to the active site.

Heterodimer of HisH and HisF.

The protein resides in the cytoplasm. The catalysed reaction is 5-[(5-phospho-1-deoxy-D-ribulos-1-ylimino)methylamino]-1-(5-phospho-beta-D-ribosyl)imidazole-4-carboxamide + L-glutamine = D-erythro-1-(imidazol-4-yl)glycerol 3-phosphate + 5-amino-1-(5-phospho-beta-D-ribosyl)imidazole-4-carboxamide + L-glutamate + H(+). It catalyses the reaction L-glutamine + H2O = L-glutamate + NH4(+). Its pathway is amino-acid biosynthesis; L-histidine biosynthesis; L-histidine from 5-phospho-alpha-D-ribose 1-diphosphate: step 5/9. In terms of biological role, IGPS catalyzes the conversion of PRFAR and glutamine to IGP, AICAR and glutamate. The HisH subunit provides the glutamine amidotransferase activity that produces the ammonia necessary to HisF for the synthesis of IGP and AICAR. The chain is Imidazole glycerol phosphate synthase subunit HisH 2 from Legionella pneumophila (strain Paris).